The following is a 1368-amino-acid chain: DNA-directed RNA polymerase subunit beta (1368 aa).

The protein belongs to the RNA polymerase beta chain family. The RNAP catalytic core consists of 2 alpha, 1 beta, 1 beta' and 1 omega subunit. When a sigma factor is associated with the core the holoenzyme is formed, which can initiate transcription.

The enzyme catalyses RNA(n) + a ribonucleoside 5'-triphosphate = RNA(n+1) + diphosphate. Functionally, DNA-dependent RNA polymerase catalyzes the transcription of DNA into RNA using the four ribonucleoside triphosphates as substrates. The chain is DNA-directed RNA polymerase subunit beta from Syntrophotalea carbinolica (strain DSM 2380 / NBRC 103641 / GraBd1) (Pelobacter carbinolicus).